We begin with the raw amino-acid sequence, 337 residues long: LIX1-like protein (337 aa).

A disordered region spans residues Met1–Pro55. Positions Pro26–Pro38 are enriched in low complexity. Positions Pro39–Pro55 are enriched in pro residues.

Belongs to the LIX1 family.

The sequence is that of LIX1-like protein (Lix1l) from Mus musculus (Mouse).